A 209-amino-acid polypeptide reads, in one-letter code: Ribosomal RNA small subunit methyltransferase G (209 aa).

S-adenosyl-L-methionine-binding positions include G75, L80, 126–127, and R141; that span reads VE.

This sequence belongs to the methyltransferase superfamily. RNA methyltransferase RsmG family.

It localises to the cytoplasm. It catalyses the reaction guanosine(527) in 16S rRNA + S-adenosyl-L-methionine = N(7)-methylguanosine(527) in 16S rRNA + S-adenosyl-L-homocysteine. Specifically methylates the N7 position of guanine in position 527 of 16S rRNA. In Colwellia psychrerythraea (strain 34H / ATCC BAA-681) (Vibrio psychroerythus), this protein is Ribosomal RNA small subunit methyltransferase G.